A 189-amino-acid polypeptide reads, in one-letter code: Peptidyl-tRNA hydrolase (189 aa).

His19 (proton acceptor) is an active-site residue. The tRNA site is built by Tyr64, Asn66, and Asn112.

It belongs to the PTH family. Monomer.

Its subcellular location is the cytoplasm. The enzyme catalyses an N-acyl-L-alpha-aminoacyl-tRNA + H2O = an N-acyl-L-amino acid + a tRNA + H(+). In terms of biological role, hydrolyzes ribosome-free peptidyl-tRNAs (with 1 or more amino acids incorporated), which drop off the ribosome during protein synthesis, or as a result of ribosome stalling. Functionally, catalyzes the release of premature peptidyl moieties from peptidyl-tRNA molecules trapped in stalled 50S ribosomal subunits, and thus maintains levels of free tRNAs and 50S ribosomes. The chain is Peptidyl-tRNA hydrolase from Gluconobacter oxydans (strain 621H) (Gluconobacter suboxydans).